The chain runs to 483 residues: UDP-N-acetylmuramoyl-L-alanyl-D-glutamate--2,6-diaminopimelate ligase (483 aa).

Ser30 serves as a coordination point for UDP-N-acetyl-alpha-D-muramoyl-L-alanyl-D-glutamate. Residue 109-115 (GTNGKTT) participates in ATP binding. UDP-N-acetyl-alpha-D-muramoyl-L-alanyl-D-glutamate is bound by residues 151–152 (TT), Ser178, and Arg186. Position 218 is an N6-carboxylysine (Lys218). Meso-2,6-diaminopimelate contacts are provided by residues Arg380, 403–406 (DNPR), Gly453, and Glu457. The Meso-diaminopimelate recognition motif signature appears at 403 to 406 (DNPR).

It belongs to the MurCDEF family. MurE subfamily. Mg(2+) is required as a cofactor. Carboxylation is probably crucial for Mg(2+) binding and, consequently, for the gamma-phosphate positioning of ATP.

It localises to the cytoplasm. It carries out the reaction UDP-N-acetyl-alpha-D-muramoyl-L-alanyl-D-glutamate + meso-2,6-diaminopimelate + ATP = UDP-N-acetyl-alpha-D-muramoyl-L-alanyl-gamma-D-glutamyl-meso-2,6-diaminopimelate + ADP + phosphate + H(+). It functions in the pathway cell wall biogenesis; peptidoglycan biosynthesis. Its function is as follows. Catalyzes the addition of meso-diaminopimelic acid to the nucleotide precursor UDP-N-acetylmuramoyl-L-alanyl-D-glutamate (UMAG) in the biosynthesis of bacterial cell-wall peptidoglycan. The protein is UDP-N-acetylmuramoyl-L-alanyl-D-glutamate--2,6-diaminopimelate ligase of Chlamydia caviae (strain ATCC VR-813 / DSM 19441 / 03DC25 / GPIC) (Chlamydophila caviae).